The sequence spans 744 residues: Kinesin-like protein KIF2A (744 aa).

The segment at 66–186 is disordered; that stretch reads LVPDEEIEPS…QQELREKRAQ (121 aa). A Phosphoserine modification is found at Ser75. 2 positions are modified to phosphothreonine: Thr78 and Thr97. At Ser100 the chain carries Phosphoserine. Lys102 carries the post-translational modification N6-acetyllysine. The span at 123–140 shows a compositional bias: polar residues; it reads FPEQSSSAQQNGSVSDIS. Ser135 and Ser140 each carry phosphoserine. The stretch at 154–187 forms a coiled coil; that stretch reads RRKSNCVKEVEKLQEKREKRRLQQQELREKRAQD. A compositionally biased stretch (basic and acidic residues) spans 159 to 186; that stretch reads CVKEVEKLQEKREKRRLQQQELREKRAQ. Positions 223–553 constitute a Kinesin motor domain; sequence RICVCVRKRP…LRYANRVKEF (331 aa). 313-320 serves as a coordination point for ATP; the sequence is GQTGSGKT. Residues 698-737 are a coiled coil; it reads ATQLEAILEQKIDILTELRDKVKSFRAALQEEEQASKQIN.

Belongs to the TRAFAC class myosin-kinesin ATPase superfamily. Kinesin family. MCAK/KIF2 subfamily. As to quaternary structure, interacts with AURKA and PLK1. Interacts with PSRC1. Interacts with MCRS1; the interaction enhances recruitment of KIF2A to the minus ends of spindle microtubules which promotes chromosome alignment.

Its subcellular location is the cytoplasm. It is found in the cytoskeleton. The protein resides in the microtubule organizing center. The protein localises to the centrosome. It localises to the spindle pole. Its subcellular location is the spindle. Plus end-directed microtubule-dependent motor required for normal brain development. May regulate microtubule dynamics during axonal growth. Required for normal progression through mitosis. Required for normal congress of chromosomes at the metaphase plate. Required for normal spindle dynamics during mitosis. Promotes spindle turnover. Implicated in formation of bipolar mitotic spindles. Has microtubule depolymerization activity. The sequence is that of Kinesin-like protein KIF2A from Pongo abelii (Sumatran orangutan).